The following is a 268-amino-acid chain: Tryptophan synthase alpha chain (268 aa).

Residues glutamate 49 and aspartate 60 each act as proton acceptor in the active site.

It belongs to the TrpA family. In terms of assembly, tetramer of two alpha and two beta chains.

It catalyses the reaction (1S,2R)-1-C-(indol-3-yl)glycerol 3-phosphate + L-serine = D-glyceraldehyde 3-phosphate + L-tryptophan + H2O. It participates in amino-acid biosynthesis; L-tryptophan biosynthesis; L-tryptophan from chorismate: step 5/5. Functionally, the alpha subunit is responsible for the aldol cleavage of indoleglycerol phosphate to indole and glyceraldehyde 3-phosphate. This is Tryptophan synthase alpha chain from Pseudomonas paraeruginosa (strain DSM 24068 / PA7) (Pseudomonas aeruginosa (strain PA7)).